Here is a 293-residue protein sequence, read N- to C-terminus: Putative metal ABC transporter substrate-binding protein Hpf (293 aa).

The N-terminal stretch at 1 to 22 (MRNSFKIMTALALGLFAMQANA) is a signal peptide. The interaction with host components stretch occupies residues 23 to 48 (KFKVVTTFTVIQDIAQNVAGNAATVE). Residues H58, H123, E189, and D264 each contribute to the a divalent metal cation site.

The protein belongs to the bacterial solute-binding protein 9 family. As to quaternary structure, interacts with host laminin and vitronectin. Can interact with both immobilized and soluble vitronectin.

The protein localises to the cell outer membrane. It localises to the cell surface. Its subcellular location is the periplasm. Its function is as follows. Part of an ATP-binding cassette (ABC) transport system involved in metal import. Binds a metal with high affinity and specificity and delivers it to the membrane permease for translocation into the cytoplasm. Acts as an adhesin that promotes binding of H.influenzae to host laminin and vitronectin. In addition, interaction with serum vitronectin plays an important role in bacterial serum resistance. The chain is Putative metal ABC transporter substrate-binding protein Hpf (hpf) from Haemophilus influenzae (strain NTHi 3655).